A 429-amino-acid polypeptide reads, in one-letter code: Adenylosuccinate synthetase (429 aa).

Residues 12-18 (GDEGKGK) and 40-42 (GHT) each bind GTP. The active-site Proton acceptor is D13. The Mg(2+) site is built by D13 and G40. Residues 13–16 (DEGK), 38–41 (NAGH), T129, R143, Q223, T238, and R302 each bind IMP. H41 serves as the catalytic Proton donor. Substrate is bound at residue 298–304 (TVTGRKR). GTP is bound by residues R304, 330 to 332 (KLD), and 412 to 414 (STS).

The protein belongs to the adenylosuccinate synthetase family. In terms of assembly, homodimer. Requires Mg(2+) as cofactor.

It localises to the cytoplasm. It carries out the reaction IMP + L-aspartate + GTP = N(6)-(1,2-dicarboxyethyl)-AMP + GDP + phosphate + 2 H(+). It functions in the pathway purine metabolism; AMP biosynthesis via de novo pathway; AMP from IMP: step 1/2. In terms of biological role, plays an important role in the de novo pathway of purine nucleotide biosynthesis. Catalyzes the first committed step in the biosynthesis of AMP from IMP. The protein is Adenylosuccinate synthetase of Rhizorhabdus wittichii (strain DSM 6014 / CCUG 31198 / JCM 15750 / NBRC 105917 / EY 4224 / RW1) (Sphingomonas wittichii).